Consider the following 239-residue polypeptide: Large ribosomal subunit protein uL2 (239 aa).

Disordered stretches follow at residues Met1 to Pro20 and Phe202 to Arg239.

This sequence belongs to the universal ribosomal protein uL2 family. As to quaternary structure, part of the 50S ribosomal subunit. Forms a bridge to the 30S subunit in the 70S ribosome.

One of the primary rRNA binding proteins. Required for association of the 30S and 50S subunits to form the 70S ribosome, for tRNA binding and peptide bond formation. It has been suggested to have peptidyltransferase activity; this is somewhat controversial. Makes several contacts with the 16S rRNA in the 70S ribosome. The protein is Large ribosomal subunit protein uL2 of Methanosphaerula palustris (strain ATCC BAA-1556 / DSM 19958 / E1-9c).